Here is a 91-residue protein sequence, read N- to C-terminus: DNA-directed RNA polymerase subunit omega (91 aa).

Belongs to the RNA polymerase subunit omega family. As to quaternary structure, the RNAP catalytic core consists of 2 alpha, 1 beta, 1 beta' and 1 omega subunit. When a sigma factor is associated with the core the holoenzyme is formed, which can initiate transcription.

The enzyme catalyses RNA(n) + a ribonucleoside 5'-triphosphate = RNA(n+1) + diphosphate. Functionally, promotes RNA polymerase assembly. Latches the N- and C-terminal regions of the beta' subunit thereby facilitating its interaction with the beta and alpha subunits. The protein is DNA-directed RNA polymerase subunit omega of Yersinia pestis bv. Antiqua (strain Antiqua).